Here is a 164-residue protein sequence, read N- to C-terminus: Superoxide dismutase [Cu-Zn] 3 (164 aa).

Positions 51, 53, and 68 each coordinate Cu cation. An intrachain disulfide couples cysteine 62 to cysteine 151. Zn(2+) is bound by residues histidine 68, histidine 76, histidine 85, and aspartate 88. Residue histidine 125 coordinates Cu cation. The Peroxisome localization signal signature appears at alanine 162–leucine 164.

This sequence belongs to the Cu-Zn superoxide dismutase family. In terms of assembly, homodimer. The cofactor is Cu cation. Requires Zn(2+) as cofactor. In terms of tissue distribution, expressed in leaves (at protein level).

The protein localises to the peroxisome. The enzyme catalyses 2 superoxide + 2 H(+) = H2O2 + O2. Destroys radicals which are normally produced within the cells and which are toxic to biological systems. This chain is Superoxide dismutase [Cu-Zn] 3 (CSD3), found in Arabidopsis thaliana (Mouse-ear cress).